We begin with the raw amino-acid sequence, 426 residues long: Serine hydroxymethyltransferase (426 aa).

Residues Leu-122 and 126–128 each bind (6S)-5,6,7,8-tetrahydrofolate; that span reads GHL. An N6-(pyridoxal phosphate)lysine modification is found at Lys-231. (6S)-5,6,7,8-tetrahydrofolate-binding positions include Glu-247 and 355–357; that span reads SPF.

Belongs to the SHMT family. Homodimer. The cofactor is pyridoxal 5'-phosphate.

Its subcellular location is the cytoplasm. The catalysed reaction is (6R)-5,10-methylene-5,6,7,8-tetrahydrofolate + glycine + H2O = (6S)-5,6,7,8-tetrahydrofolate + L-serine. It participates in one-carbon metabolism; tetrahydrofolate interconversion. Its pathway is amino-acid biosynthesis; glycine biosynthesis; glycine from L-serine: step 1/1. Functionally, catalyzes the reversible interconversion of serine and glycine with tetrahydrofolate (THF) serving as the one-carbon carrier. This reaction serves as the major source of one-carbon groups required for the biosynthesis of purines, thymidylate, methionine, and other important biomolecules. Also exhibits THF-independent aldolase activity toward beta-hydroxyamino acids, producing glycine and aldehydes, via a retro-aldol mechanism. The sequence is that of Serine hydroxymethyltransferase from Cyanothece sp. (strain PCC 7425 / ATCC 29141).